The primary structure comprises 228 residues: MTIKLNLYGKEDIGNYILLTNSYCIVPHDINSKNYNIIKSELDNKINIICTNVSESICVGNLLIGNSKGLIVPNTITFHEQNELLNFLPEKVLVKKFNENLTNLGNLLAHNELYGLSSPDLSQSSCELISDVLGVEILKLTLGEEKMIGTYCKFNINGGIVQPFLSIEDHDELVEITGVPFIGGTVNSGCSNVGKGIVCNDNLVFCGYKTNQTEMHIINNIMKKSKNK.

It belongs to the eIF-6 family. Monomer. Associates with the 60S ribosomal subunit.

The protein resides in the cytoplasm. It is found in the nucleus. It localises to the nucleolus. Its function is as follows. Binds to the 60S ribosomal subunit and prevents its association with the 40S ribosomal subunit to form the 80S initiation complex in the cytoplasm. May also be involved in ribosome biogenesis. The protein is Eukaryotic translation initiation factor 6 of Guillardia theta (Cryptophyte).